The chain runs to 200 residues: Small ribosomal subunit protein uS4 (200 aa).

An S4 RNA-binding domain is found at Ser-92 to Val-155.

It belongs to the universal ribosomal protein uS4 family. As to quaternary structure, part of the 30S ribosomal subunit. Contacts protein S5. The interaction surface between S4 and S5 is involved in control of translational fidelity.

Functionally, one of the primary rRNA binding proteins, it binds directly to 16S rRNA where it nucleates assembly of the body of the 30S subunit. In terms of biological role, with S5 and S12 plays an important role in translational accuracy. This chain is Small ribosomal subunit protein uS4, found in Staphylococcus aureus (strain MRSA252).